The sequence spans 561 residues: Centromere protein T (561 aa).

The segment at 1-83 is disordered; the sequence is MADHNPDSDS…HIQASGHLEE (83 aa). Basic and acidic residues predominate over residues 18 to 27; it reads RVLDTADPRT. Positions 34 to 46 are enriched in low complexity; that stretch reads ARAGARRALLETA. At Ser-47 the chain carries Phosphoserine. Phosphothreonine is present on Thr-85. The tract at residues 93-421 is flexible stalk domain; that stretch reads ILLTAPESSI…RHHQFLEPAP (329 aa). Disordered regions lie at residues 256–292 and 333–457; these read HSLPCTPHTGAEDAEQAAGRKTQSSGPGLQKNSPGKP and AEKK…DPHK. The segment covering 276–288 has biased composition (polar residues); that stretch reads KTQSSGPGLQKNS. Ser-343, Ser-345, and Ser-356 each carry phosphoserine. Over residues 357 to 367 the composition is skewed to basic and acidic residues; it reads RVEEAEGHTEV. Phosphoserine is present on residues Ser-373, Ser-385, Ser-386, and Ser-397. Residues 395 to 407 are compositionally biased toward low complexity; sequence AASPESASSTPES.

This sequence belongs to the CENP-T/CNN1 family. As to quaternary structure, component of the CENPA-CAD complex, composed of CENPI, CENPK, CENPL, CENPO, CENPP, CENPQ, CENPR and CENPS. The CENPA-CAD complex is probably recruited on centromeres by the CENPA-NAC complex, at least composed of CENPA, CENPC, CENPH, CENPM, CENPN, CENPT and CENPU. Identified in a centromeric complex containing histones H2A, H2B, H3 and H4, and at least CENPA, CENPB, CENPC, CENPT, CENPN, HJURP, SUPT16H, SSRP1 and RSF1. Interacts (via N-terminus) with the NDC80 complex. Heterodimer with CENPW; this dimer coassembles with CENPS-CENPX heterodimers at centromeres to form the tetrameric CENP-T-W-S-X complex. Post-translationally, dynamically phosphorylated at Ser-47 and probably also other sites during the cell cycle. Phosphorylated at Ser-47 during G2 phase, metaphase and anaphase, but not during telophase or G1 phase.

Its subcellular location is the nucleus. The protein resides in the chromosome. It is found in the centromere. It localises to the kinetochore. Component of the CENPA-NAC (nucleosome-associated) complex, a complex that plays a central role in assembly of kinetochore proteins, mitotic progression and chromosome segregation. The CENPA-NAC complex recruits the CENPA-CAD (nucleosome distal) complex and may be involved in incorporation of newly synthesized CENPA into centromeres. Part of a nucleosome-associated complex that binds specifically to histone H3-containing nucleosomes at the centromere, as opposed to nucleosomes containing CENPA. Component of the heterotetrameric CENP-T-W-S-X complex that binds and supercoils DNA, and plays an important role in kinetochore assembly. CENPT has a fundamental role in kinetochore assembly and function. It is one of the inner kinetochore proteins, with most further proteins binding downstream. Required for normal chromosome organization and normal progress through mitosis. This chain is Centromere protein T (CENPT), found in Homo sapiens (Human).